The primary structure comprises 458 residues: Adenylosuccinate synthetase (458 aa).

GTP-binding positions include 17-23 and 45-47; these read GDEGKGK and GHT. Residue Asp18 is the Proton acceptor of the active site. Residues Asp18 and Gly45 each contribute to the Mg(2+) site. IMP contacts are provided by residues 18-21, 43-46, Thr137, Arg151, Gln247, Thr262, and Arg330; these read DEGK and NAGH. His46 functions as the Proton donor in the catalytic mechanism. 326-332 provides a ligand contact to substrate; that stretch reads VTTGRSR. GTP contacts are provided by residues Arg332, 358–360, and 440–442; these read KLD and STS.

It belongs to the adenylosuccinate synthetase family. Homodimer. Requires Mg(2+) as cofactor.

It localises to the cytoplasm. It catalyses the reaction IMP + L-aspartate + GTP = N(6)-(1,2-dicarboxyethyl)-AMP + GDP + phosphate + 2 H(+). It participates in purine metabolism; AMP biosynthesis via de novo pathway; AMP from IMP: step 1/2. Its function is as follows. Plays an important role in the de novo pathway of purine nucleotide biosynthesis. Catalyzes the first committed step in the biosynthesis of AMP from IMP. This chain is Adenylosuccinate synthetase, found in Acidovorax sp. (strain JS42).